Reading from the N-terminus, the 118-residue chain is DNA mimic protein DMP12 (118 aa).

Belongs to the DMP12-like protein family. In terms of assembly, monomer. Interacts with the dimeric form of the DNA-binding protein HU.

Its function is as follows. Acts as a DNA mimic. Interacts with the DNA-binding protein HU and partially prevents the binding of HU protein to DNA by occupying the DNA binding sites on the protein. However, the relatively weak affinity of DMP12 for HU suggests that it may not completely block the HU protein-DNA binding, and that DMP12 is more likely to act as a regulator than a competitive inhibitor. It protects HU protein from limited digestion by trypsin in a limited trypsin digestion assay, suggesting that it may serve to protect the HU protein and improve the stability of unbound HU protein. The sequence is that of DNA mimic protein DMP12 from Neisseria meningitidis serogroup B (strain ATCC BAA-335 / MC58).